A 299-amino-acid polypeptide reads, in one-letter code: Formin-like protein 12 (299 aa).

One can recognise an FH2 domain in the interval 1–295 (MASNCEKMLS…LEKRKMNIKQ (295 aa)).

The protein belongs to the formin-like family. Class-II subfamily.

The chain is Formin-like protein 12 (FH12) from Arabidopsis thaliana (Mouse-ear cress).